The chain runs to 299 residues: 33 kDa chaperonin (299 aa).

Cystine bridges form between cysteine 234-cysteine 236 and cysteine 268-cysteine 271.

The protein belongs to the HSP33 family. Post-translationally, under oxidizing conditions two disulfide bonds are formed involving the reactive cysteines. Under reducing conditions zinc is bound to the reactive cysteines and the protein is inactive.

Its subcellular location is the cytoplasm. Redox regulated molecular chaperone. Protects both thermally unfolding and oxidatively damaged proteins from irreversible aggregation. Plays an important role in the bacterial defense system toward oxidative stress. The sequence is that of 33 kDa chaperonin from Pseudomonas putida (strain GB-1).